The following is a 399-amino-acid chain: Xylose repressor (399 aa).

The segment at residues 27–46 is a DNA-binding region (H-T-H motif); that stretch reads RTKISKLVDLNKATVSNLTD.

Belongs to the ROK (NagC/XylR) family.

In terms of biological role, transcriptional repressor of xylose-utilizing enzymes. This is Xylose repressor (xylR) from Caldicellulosiruptor bescii (strain ATCC BAA-1888 / DSM 6725 / KCTC 15123 / Z-1320) (Anaerocellum thermophilum).